The following is a 157-amino-acid chain: Ribosome maturation factor RimP (157 aa).

Belongs to the RimP family.

It localises to the cytoplasm. Its function is as follows. Required for maturation of 30S ribosomal subunits. The chain is Ribosome maturation factor RimP from Synechococcus sp. (strain CC9311).